A 100-amino-acid polypeptide reads, in one-letter code: Small ribosomal subunit protein uS14c (100 aa).

It belongs to the universal ribosomal protein uS14 family. As to quaternary structure, part of the 30S ribosomal subunit.

Its subcellular location is the plastid. The protein localises to the chloroplast. Functionally, binds 16S rRNA, required for the assembly of 30S particles. The chain is Small ribosomal subunit protein uS14c from Chloranthus spicatus (Chulantree).